A 679-amino-acid chain; its full sequence is Enzymatic polyprotein (679 aa).

Positions 40-130 are protease; the sequence is LHCFVDTGAS…LYEPFIQFTD (91 aa). Asp-45 is a catalytic residue. The Reverse transcriptase domain maps to 272 to 452; it reads LKVIKPSKSP…KKINFLGLEI (181 aa).

The protein belongs to the caulimoviridae enzymatic polyprotein family.

It carries out the reaction DNA(n) + a 2'-deoxyribonucleoside 5'-triphosphate = DNA(n+1) + diphosphate. Functionally, encodes for at least two polypeptides: protease (PR) and reverse transcriptase (RT). The protease processes the polyprotein in cis. Reverse transcriptase is multifunctional enzyme that converts the viral RNA genome into dsDNA in viral cytoplasmic capsids. This enzyme displays a DNA polymerase activity that can copy either DNA or RNA templates, and a ribonuclease H (RNase H) activity that cleaves the RNA strand of RNA-DNA heteroduplexes in a partially processive 3'- to 5'-endonucleasic mode. Neo-synthesized pregenomic RNA (pgRNA) are encapsidated, and reverse-transcribed inside the nucleocapsid. Partial (+)DNA is synthesized from the (-)DNA template and generates the relaxed circular DNA (RC-DNA) genome. After budding and infection, the RC-DNA migrates in the nucleus, and is converted into a plasmid-like covalently closed circular DNA (cccDNA). This Arabidopsis thaliana (Mouse-ear cress) protein is Enzymatic polyprotein.